An 86-amino-acid polypeptide reads, in one-letter code: Large ribosomal subunit protein bL31 (86 aa).

The interval 66–86 is disordered; it reads GMGSANSATSKEQKADKDSQK. The span at 76–86 shows a compositional bias: basic and acidic residues; the sequence is KEQKADKDSQK.

This sequence belongs to the bacterial ribosomal protein bL31 family. Type A subfamily. Part of the 50S ribosomal subunit.

In terms of biological role, binds the 23S rRNA. The chain is Large ribosomal subunit protein bL31 from Prochlorococcus marinus (strain MIT 9215).